The chain runs to 72 residues: Large ribosomal subunit protein bL31 (72 aa).

Zn(2+) contacts are provided by C16, C18, C38, and C41.

The protein belongs to the bacterial ribosomal protein bL31 family. Type A subfamily. In terms of assembly, part of the 50S ribosomal subunit. Requires Zn(2+) as cofactor.

Functionally, binds the 23S rRNA. The sequence is that of Large ribosomal subunit protein bL31 from Aliivibrio fischeri (strain ATCC 700601 / ES114) (Vibrio fischeri).